A 120-amino-acid polypeptide reads, in one-letter code: Autophagy-related protein 8C (120 aa).

A disordered region spans residues 1 to 20; it reads MARSSFKLEHPLERRQAEAN. The Phosphatidylethanolamine amidated glycine moiety is linked to residue glycine 117. The propeptide at 118 to 120 is removed in mature form; it reads LFV.

It belongs to the ATG8 family. Interacts with ATG4. The C-terminal 3 residues are removed by ATG4 to expose Gly-117 at the C-terminus. The C-terminal Gly is then amidated with phosphatidylethanolamine by an activating system similar to that for ubiquitin.

It localises to the cytoplasmic vesicle. The protein localises to the autophagosome membrane. Its subcellular location is the vacuole membrane. It is found in the cytoplasm. The protein resides in the cytoskeleton. Ubiquitin-like modifier involved in autophagosomes formation. May mediate the delivery of the autophagosomes to the vacuole via the microtubule cytoskeleton. The polypeptide is Autophagy-related protein 8C (ATG8C) (Oryza sativa subsp. indica (Rice)).